Consider the following 107-residue polypeptide: Large ribosomal subunit protein P2 (107 aa).

The span at 63–83 (SSVPSGGSAPAAAAPSGGAAP) shows a compositional bias: low complexity. A disordered region spans residues 63-107 (SSVPSGGSAPAAAAPSGGAAPKAEEKKKEEPKEESDDDMGFGLFD). A compositionally biased stretch (basic and acidic residues) spans 84 to 93 (KAEEKKKEEP).

The protein belongs to the eukaryotic ribosomal protein P1/P2 family. P1 and P2 exist as dimers at the large ribosomal subunit. Post-translationally, phosphorylated.

Plays an important role in the elongation step of protein synthesis. This Caenorhabditis elegans protein is Large ribosomal subunit protein P2.